The following is a 138-amino-acid chain: Protein Turandot B (138 aa).

An N-terminal signal peptide occupies residues Met-1 to Ala-21.

The protein belongs to the Turandot family.

It is found in the secreted. Its function is as follows. A humoral factor that may play a role in stress tolerance. This Drosophila melanogaster (Fruit fly) protein is Protein Turandot B.